Reading from the N-terminus, the 490-residue chain is Glutamyl-tRNA(Gln) amidotransferase subunit A (490 aa).

Catalysis depends on charge relay system residues Lys78 and Ser158. Ser182 (acyl-ester intermediate) is an active-site residue.

Belongs to the amidase family. GatA subfamily. As to quaternary structure, heterotrimer of A, B and C subunits.

It catalyses the reaction L-glutamyl-tRNA(Gln) + L-glutamine + ATP + H2O = L-glutaminyl-tRNA(Gln) + L-glutamate + ADP + phosphate + H(+). Functionally, allows the formation of correctly charged Gln-tRNA(Gln) through the transamidation of misacylated Glu-tRNA(Gln) in organisms which lack glutaminyl-tRNA synthetase. The reaction takes place in the presence of glutamine and ATP through an activated gamma-phospho-Glu-tRNA(Gln). This Caulobacter sp. (strain K31) protein is Glutamyl-tRNA(Gln) amidotransferase subunit A.